The sequence spans 126 residues: Glycine cleavage system H protein (126 aa).

Residues 22-104 (VAYVGITDYA…YGKGWLIKIS (83 aa)) enclose the Lipoyl-binding domain. Lys-63 carries the post-translational modification N6-lipoyllysine.

It belongs to the GcvH family. The glycine cleavage system is composed of four proteins: P, T, L and H. (R)-lipoate is required as a cofactor.

In terms of biological role, the glycine cleavage system catalyzes the degradation of glycine. The H protein shuttles the methylamine group of glycine from the P protein to the T protein. The protein is Glycine cleavage system H protein of Parabacteroides distasonis (strain ATCC 8503 / DSM 20701 / CIP 104284 / JCM 5825 / NCTC 11152).